Consider the following 225-residue polypeptide: Large ribosomal subunit protein uL1 (225 aa).

The protein belongs to the universal ribosomal protein uL1 family. Part of the 50S ribosomal subunit.

Its function is as follows. Binds directly to 23S rRNA. The L1 stalk is quite mobile in the ribosome, and is involved in E site tRNA release. Functionally, protein L1 is also a translational repressor protein, it controls the translation of the L11 operon by binding to its mRNA. This chain is Large ribosomal subunit protein uL1, found in Rhodopirellula baltica (strain DSM 10527 / NCIMB 13988 / SH1).